The sequence spans 376 residues: Bifunctional enzyme IspD/IspF (376 aa).

The segment at 1-220 (MRIAAILVAG…RSMSISMIPR (220 aa)) is 2-C-methyl-D-erythritol 4-phosphate cytidylyltransferase. The 2-C-methyl-D-erythritol 2,4-cyclodiphosphate synthase stretch occupies residues 220-376 (RIGTGYDVHA…QAAVIIMIPA (157 aa)). Aspartate 226 and histidine 228 together coordinate a divalent metal cation. 4-CDP-2-C-methyl-D-erythritol 2-phosphate is bound by residues 226 to 228 (DVH) and 252 to 253 (HS). Histidine 260 serves as a coordination point for a divalent metal cation. Residues 274 to 276 (DIG), 350 to 353 (TTSE), phenylalanine 357, and arginine 360 each bind 4-CDP-2-C-methyl-D-erythritol 2-phosphate.

The protein in the N-terminal section; belongs to the IspD/TarI cytidylyltransferase family. IspD subfamily. In the C-terminal section; belongs to the IspF family. It depends on a divalent metal cation as a cofactor.

It carries out the reaction 2-C-methyl-D-erythritol 4-phosphate + CTP + H(+) = 4-CDP-2-C-methyl-D-erythritol + diphosphate. The catalysed reaction is 4-CDP-2-C-methyl-D-erythritol 2-phosphate = 2-C-methyl-D-erythritol 2,4-cyclic diphosphate + CMP. The protein operates within isoprenoid biosynthesis; isopentenyl diphosphate biosynthesis via DXP pathway; isopentenyl diphosphate from 1-deoxy-D-xylulose 5-phosphate: step 2/6. It participates in isoprenoid biosynthesis; isopentenyl diphosphate biosynthesis via DXP pathway; isopentenyl diphosphate from 1-deoxy-D-xylulose 5-phosphate: step 4/6. Bifunctional enzyme that catalyzes the formation of 4-diphosphocytidyl-2-C-methyl-D-erythritol from CTP and 2-C-methyl-D-erythritol 4-phosphate (MEP) (IspD), and catalyzes the conversion of 4-diphosphocytidyl-2-C-methyl-D-erythritol 2-phosphate (CDP-ME2P) to 2-C-methyl-D-erythritol 2,4-cyclodiphosphate (ME-CPP) with a corresponding release of cytidine 5-monophosphate (CMP) (IspF). The polypeptide is Bifunctional enzyme IspD/IspF (Granulibacter bethesdensis (strain ATCC BAA-1260 / CGDNIH1)).